A 133-amino-acid chain; its full sequence is Serine/threonine-protein kinase RsbT (133 aa).

The enzyme catalyses L-seryl-[protein] + ATP = O-phospho-L-seryl-[protein] + ADP + H(+). The catalysed reaction is L-threonyl-[protein] + ATP = O-phospho-L-threonyl-[protein] + ADP + H(+). Functionally, provides the crucial link between the upstream module (communication of environmental stress) and the downstream module (integration of the environmental signals with signals of energy stress) that compose the signal transduction pathway controlling the sigma-B factor. Phosphorylates and inactivates its specific antagonist protein RsbS thanks to its serine kinase activity. Upon phosphorylation of RsbS, RsbT is released to stimulate RsbU, a PP2C phosphatase, thereby initiating the signaling cascade that ultimately activates sigma-B. The activity of the RsbU phosphatase may be stimulated by a long-lived interaction with RsbT and the serine kinase function of RsbT is not required to directly modify RsbU. Also phosphorylates RsbR thanks to its threonine kinase activity, preventing it to phosphorylate RsbT. The protein is Serine/threonine-protein kinase RsbT (rsbT) of Bacillus subtilis (strain 168).